The sequence spans 90 residues: ATP-dependent Clp protease adapter protein ClpS (90 aa).

The protein belongs to the ClpS family. Binds to the N-terminal domain of the chaperone ClpA.

Functionally, involved in the modulation of the specificity of the ClpAP-mediated ATP-dependent protein degradation. The sequence is that of ATP-dependent Clp protease adapter protein ClpS from Helicobacter pylori (strain J99 / ATCC 700824) (Campylobacter pylori J99).